Reading from the N-terminus, the 252-residue chain is 7-carboxy-7-deazaguanine synthase (252 aa).

Residues 22 to 24 and arginine 37 contribute to the substrate site; that span reads LQG. The region spanning 28 to 251 is the Radical SAM core domain; it reads FVGEPQAFVR…QVHKLVDFIP (224 aa). Positions 41, 45, and 48 each coordinate [4Fe-4S] cluster. Substrate is bound at residue threonine 102. Glycine 104 serves as a coordination point for S-adenosyl-L-methionine.

Belongs to the radical SAM superfamily. 7-carboxy-7-deazaguanine synthase family. In terms of assembly, homodimer. [4Fe-4S] cluster serves as cofactor. S-adenosyl-L-methionine is required as a cofactor. Requires Mg(2+) as cofactor.

The catalysed reaction is 6-carboxy-5,6,7,8-tetrahydropterin + H(+) = 7-carboxy-7-deazaguanine + NH4(+). The protein operates within purine metabolism; 7-cyano-7-deazaguanine biosynthesis. Its function is as follows. Catalyzes the complex heterocyclic radical-mediated conversion of 6-carboxy-5,6,7,8-tetrahydropterin (CPH4) to 7-carboxy-7-deazaguanine (CDG), a step common to the biosynthetic pathways of all 7-deazapurine-containing compounds. This is 7-carboxy-7-deazaguanine synthase from Methanopyrus kandleri (strain AV19 / DSM 6324 / JCM 9639 / NBRC 100938).